The following is a 531-amino-acid chain: GMP synthase [glutamine-hydrolyzing] (531 aa).

Residues 20–213 form the Glutamine amidotransferase type-1 domain; the sequence is KILIVDFGSQ…VRKVAGLKGD (194 aa). Cys97 (nucleophile) is an active-site residue. Catalysis depends on residues His187 and Glu189. A GMPS ATP-PPase domain is found at 214 to 406; the sequence is WTMRAFREEA…LGLPDVFVGR (193 aa). 241 to 247 contacts ATP; that stretch reads SGGVDSA.

As to quaternary structure, homodimer.

The catalysed reaction is XMP + L-glutamine + ATP + H2O = GMP + L-glutamate + AMP + diphosphate + 2 H(+). Its pathway is purine metabolism; GMP biosynthesis; GMP from XMP (L-Gln route): step 1/1. Catalyzes the synthesis of GMP from XMP. The chain is GMP synthase [glutamine-hydrolyzing] from Afipia carboxidovorans (strain ATCC 49405 / DSM 1227 / KCTC 32145 / OM5) (Oligotropha carboxidovorans).